The following is a 323-amino-acid chain: Phospho-N-acetylmuramoyl-pentapeptide-transferase (323 aa).

Helical transmembrane passes span 5–25 (SAVL…PSLI), 57–77 (LLFI…QGLI), 81–101 (LWAL…DDSI), 118–138 (LCQV…GFQM), 140–160 (FGTT…IVGF), 173–193 (LVSG…LVNL), 196–216 (PGYP…LGFF), 225–247 (IFMG…LLLH), and 302–322 (IVFW…ILLV).

Belongs to the glycosyltransferase 4 family. MraY subfamily. It depends on Mg(2+) as a cofactor.

Its subcellular location is the cell membrane. It catalyses the reaction UDP-N-acetyl-alpha-D-muramoyl-L-alanyl-gamma-D-glutamyl-L-lysyl-D-alanyl-D-alanine + di-trans,octa-cis-undecaprenyl phosphate = Mur2Ac(oyl-L-Ala-gamma-D-Glu-L-Lys-D-Ala-D-Ala)-di-trans,octa-cis-undecaprenyl diphosphate + UMP. It participates in cell wall biogenesis; peptidoglycan biosynthesis. Functionally, catalyzes the initial step of the lipid cycle reactions in the biosynthesis of the cell wall peptidoglycan: transfers peptidoglycan precursor phospho-MurNAc-pentapeptide from UDP-MurNAc-pentapeptide onto the lipid carrier undecaprenyl phosphate, yielding undecaprenyl-pyrophosphoryl-MurNAc-pentapeptide, known as lipid I. The sequence is that of Phospho-N-acetylmuramoyl-pentapeptide-transferase from Limosilactobacillus reuteri (strain DSM 20016) (Lactobacillus reuteri).